Consider the following 348-residue polypeptide: Phosphate acyltransferase (348 aa).

It belongs to the PlsX family. Homodimer. Probably interacts with PlsY.

Its subcellular location is the cytoplasm. The enzyme catalyses a fatty acyl-[ACP] + phosphate = an acyl phosphate + holo-[ACP]. Its pathway is lipid metabolism; phospholipid metabolism. In terms of biological role, catalyzes the reversible formation of acyl-phosphate (acyl-PO(4)) from acyl-[acyl-carrier-protein] (acyl-ACP). This enzyme utilizes acyl-ACP as fatty acyl donor, but not acyl-CoA. This chain is Phosphate acyltransferase, found in Rhizorhabdus wittichii (strain DSM 6014 / CCUG 31198 / JCM 15750 / NBRC 105917 / EY 4224 / RW1) (Sphingomonas wittichii).